We begin with the raw amino-acid sequence, 1024 residues long: SWI/SNF-related matrix-associated actin-dependent regulator of chromatin subfamily A containing DEAD/H box 1 (1024 aa).

Met-1 is modified (N-acetylmethionine). Residues 1-83 (MNLFNLDRFR…NESKASLSCF (83 aa)) form a disordered region. Residues 7–19 (DRFRFEKRSKIEE) are compositionally biased toward basic and acidic residues. Thr-54 carries the phosphothreonine modification. Phosphoserine is present on Ser-57. A Glycyl lysine isopeptide (Lys-Gly) (interchain with G-Cter in SUMO2) cross-link involves residue Lys-77. A phosphoserine mark is found at Ser-79, Ser-124, Ser-127, Ser-132, Ser-145, and Ser-151. A CUE 1 domain is found at 156 to 198 (LKDAKLQTLKELFPQRSDSDLLKLIDSTSTMDGAIAAALLKFG). The tract at residues 201–250 (GGGPRKRKLSSSSEAYEEDEANDDQSLKKPRGDRREESNESAEASSNWEK) is disordered. Residues Ser-210 and Ser-213 each carry the phosphoserine modification. A Phosphotyrosine modification is found at Tyr-216. Ser-238 and Ser-241 each carry phosphoserine. One can recognise a CUE 2 domain in the interval 250–293 (KQESIVLKLQKEFPNFDKQELREVLKEHEWMYTEALESLKVFAE). Position 301 is a phosphoserine (Ser-301). The segment at 331-369 (SMKPQNGFNKKRKKNVFNPKKAVEDSEYDSGSDAGSSLD) is disordered. Glycyl lysine isopeptide (Lys-Gly) (interchain with G-Cter in SUMO2) cross-links involve residues Lys-333 and Lys-469. The Helicase ATP-binding domain occupies 507 to 675 (ALVHKHGLNG…MSLLNFVMPH (169 aa)). Residue 519–527 (ADEMGLGKT) participates in ATP binding. The DEGH box motif lies at 626-629 (DEGH). A Nuclear localization signal motif is present at residues 719–736 (RRVKEEVLKLLPPKKDQI). Lys-722 participates in a covalent cross-link: Glycyl lysine isopeptide (Lys-Gly) (interchain with G-Cter in SUMO2). Positions 856–1008 (TLGCILSELK…MTTVDEADEG (153 aa)) constitute a Helicase C-terminal domain. Position 895–902 (895–902 (YLRLDGKT)) interacts with ATP. Residue Lys-994 forms a Glycyl lysine isopeptide (Lys-Gly) (interchain with G-Cter in SUMO2) linkage. The DEAD box motif lies at 1003–1006 (DEAD).

It belongs to the SNF2/RAD54 helicase family. As to quaternary structure, binds to DNA preferentially in the vicinity of transcriptional start sites. Interacts with MSH2 and TRIM28. Part of a complex composed of TRIM28, HDAC1, HDAC2 and EHMT2. Interacts with PCNA.

The protein localises to the nucleus. Its subcellular location is the chromosome. The enzyme catalyses ATP + H2O = ADP + phosphate + H(+). DNA helicase that possesses intrinsic ATP-dependent nucleosome-remodeling activity and is both required for DNA repair and heterochromatin organization. Promotes DNA end resection of double-strand breaks (DSBs) following DNA damage: probably acts by weakening histone DNA interactions in nucleosomes flanking DSBs. Required for the restoration of heterochromatin organization after replication. Acts at replication sites to facilitate the maintenance of heterochromatin by directing H3 and H4 histones deacetylation, H3 'Lys-9' trimethylation (H3K9me3) and restoration of silencing. This chain is SWI/SNF-related matrix-associated actin-dependent regulator of chromatin subfamily A containing DEAD/H box 1 (Smarcad1), found in Rattus norvegicus (Rat).